The chain runs to 294 residues: MTATVSHAGPQVVILTGVSGSGKSTALRALEDAGFYCVDNLPIVFLEKLLELSGHTAGEVSRMALVVDAREGRFLVEAPRVIRELRQKGADVEVLFLDASDEALVRRYSETRRRHPLAGEGGTVPDGIAAERLALADVRGIADEVIDTTTLNVHELKRLVTRRFVAGDGAKLGVTLVSFGFRFGIPTHADLVLDVRFLPNPFFVPELKPHPGTDPRVAEFVLGQADAKAFLERLVDLLGFLLPRYRNEGKSYLTIAIGCTGGKHRSVALAAALAERLEGSGQPVRLWHRDVEKE.

17 to 24 (GVSGSGKS) is an ATP binding site. 68-71 (DARE) serves as a coordination point for GTP.

The protein belongs to the RapZ-like family.

Displays ATPase and GTPase activities. The sequence is that of Nucleotide-binding protein Adeh_0147 from Anaeromyxobacter dehalogenans (strain 2CP-C).